Consider the following 416-residue polypeptide: NADH-quinone oxidoreductase subunit D (416 aa).

This sequence belongs to the complex I 49 kDa subunit family. In terms of assembly, NDH-1 is composed of 14 different subunits. Subunits NuoB, C, D, E, F, and G constitute the peripheral sector of the complex.

The protein localises to the cell inner membrane. The enzyme catalyses a quinone + NADH + 5 H(+)(in) = a quinol + NAD(+) + 4 H(+)(out). In terms of biological role, NDH-1 shuttles electrons from NADH, via FMN and iron-sulfur (Fe-S) centers, to quinones in the respiratory chain. The immediate electron acceptor for the enzyme in this species is believed to be ubiquinone. Couples the redox reaction to proton translocation (for every two electrons transferred, four hydrogen ions are translocated across the cytoplasmic membrane), and thus conserves the redox energy in a proton gradient. This is NADH-quinone oxidoreductase subunit D from Caulobacter sp. (strain K31).